The chain runs to 1407 residues: Enhancer of mRNA-decapping protein 4 (1407 aa).

N-acetylalanine is present on Ala-2. 2 positions are modified to phosphoserine: Ser-3 and Ser-6. N6-acetyllysine is present on Lys-125. WD repeat units follow at residues 174 to 214, 230 to 277, 295 to 334, and 342 to 393; these read GFTG…GKIQ, NHFR…SSHS, GHST…QDEP, and PHDG…CLQT. The tract at residues 547 to 566 is disordered; it reads GESRPELGSEGLASAPHGSQ. Residues Ser-560, Ser-565, Ser-583, and Ser-585 each carry the phosphoserine modification. 2 disordered regions span residues 604 to 632 and 673 to 745; these read SLQQ…SSSS and SSSS…STAL. Composition is skewed to low complexity over residues 609–632 and 673–693; these read SASP…SSSS and SSSS…LPGP. Ser-681, Ser-713, Ser-728, and Ser-730 each carry phosphoserine. Over residues 727-745 the composition is skewed to polar residues; sequence ASPSRTRSPDVISSASTAL. A Phosphothreonine modification is found at Thr-732. Residues Ser-734 and Ser-746 each carry the phosphoserine modification. Residues 787–817 are disordered; the sequence is PRPRQGPELSSQLGLDGGPGDGDRHSTPSLL. Residue Thr-827 is modified to Phosphothreonine. A phosphoserine mark is found at Ser-850 and Ser-877. Residues 875 to 951 are disordered; the sequence is HDSQDTSAEQ…SRLTEHQVVE (77 aa). Phosphothreonine is present on Thr-880. Phosphoserine occurs at positions 881, 885, 893, 896, and 898. Thr-907 carries the phosphothreonine modification. Residues 972–1031 are a coiled coil; the sequence is HNQEELLQRLCAQLEGLQSTVTDHVERALETRHEQEQRRLERALAEGQQRGGQLQEQLTQ. Ser-1386 is modified (phosphoserine).

Belongs to the WD repeat EDC4 family. As to quaternary structure, part of a decapping complex consisting of DCP1A, DCP2, EDC3, EDC4 and probably DDX6. Part of a complex consisting of DCP1A, EDC3, EDC4 and DDX6. Part of a complex consisting of DCP1B, EDC3, EDC4 and DDX6. Interacts with DCP2. Interacts with NBDY. Interacts with Tex19.1. Interacts with LSM14A. Interacts with DDX6.

It is found in the cytoplasm. The protein resides in the P-body. Its subcellular location is the nucleus. Its function is as follows. In the process of mRNA degradation, seems to play a role in mRNA decapping. Component of a complex containing DCP2 and DCP1A which functions in decapping of ARE-containing mRNAs. Promotes complex formation between DCP1A and DCP2. Enhances the catalytic activity of DCP2 (in vitro). This Rattus norvegicus (Rat) protein is Enhancer of mRNA-decapping protein 4 (Edc4).